A 379-amino-acid chain; its full sequence is Anhydro-N-acetylmuramic acid kinase (379 aa).

G9–D16 lines the ATP pocket.

The protein belongs to the anhydro-N-acetylmuramic acid kinase family.

The catalysed reaction is 1,6-anhydro-N-acetyl-beta-muramate + ATP + H2O = N-acetyl-D-muramate 6-phosphate + ADP + H(+). It participates in amino-sugar metabolism; 1,6-anhydro-N-acetylmuramate degradation. It functions in the pathway cell wall biogenesis; peptidoglycan recycling. Its function is as follows. Catalyzes the specific phosphorylation of 1,6-anhydro-N-acetylmuramic acid (anhMurNAc) with the simultaneous cleavage of the 1,6-anhydro ring, generating MurNAc-6-P. Is required for the utilization of anhMurNAc either imported from the medium or derived from its own cell wall murein, and thus plays a role in cell wall recycling. The sequence is that of Anhydro-N-acetylmuramic acid kinase from Synechococcus sp. (strain CC9605).